An 896-amino-acid chain; its full sequence is MTDVTIKALASEIQTSVDRLIQQFADAGIRKSADDSVTAQEKQTLLTHLNREHGSAPDKLTLQRKTRSTLNIPGTGGKSKSVQIEVRKKRTFVKRDPQEAERLAAEEQAQREAEEQARREAEEAAKREAQLKAEREAAEQAKRELADKAKREAAEKDKVSNQQTDDMTKTAQAEKQRRENEAAELKRKSEEEARRKLEEEARRVAEEARRMAQENEKNWTEAPETPEETTDYHVTTSQHARQAEDDNDREVEGGRGRGRNAKAARPAKKGNKHAESKADREEARAAVRGGKGGKHRKGSALQQGFQKPAQAVNRDVIIGETITVGDLANKMAVKGSQVIKAMMKLGAMATINQVIDQETAQLVAEEMGHKVILRRENELEEAVMSDRDTGAAAEPRAPVVTIMGHVDHGKTSLLDYIRSTKVASGEAGGITQHIGAYHVETDNGMITFLDTPGHAAFTSMRARGAQATDIVVLVVAADDGVMPQTIEAIQHAKAAQVPLVVAVNKIDKPEADLDRVKNELSQYGVMPEEWGGEAQFIPVSAKAGTGIDDLLNAILLQAEVLELKAVRNGMASGAVIESFLDKGRGPVATVLVREGTLHKGDIVLCGFEYGRVRAMRNELGQEVLEAGPSIPVEILGLSGVPAAGDEVTVVRDEKKAREVALYRQGKFREVKLARQQKSKLENMFANMTEGEVHEVNIVLKADVQGSVEAISDSLLKLSTDEVKVKIIGSGVGGITETDATLAAASNAILVGFNVRADASARKVIDAESLDLRYYSVIYHLIDEVKAAMSGMLSPELKQQIIGLAEVRDVFKSPKFGAIAGCMVTEGTIKRHNPIRVLRDNVVIYEGELESLRRFKDDVNEVRNGMECGIGVKNYNDVRVGDMIEVFEIIEIQRTID.

2 stretches are compositionally biased toward basic and acidic residues: residues 94 to 159 (KRDP…KDKV) and 166 to 219 (DMTK…EKNW). The disordered stretch occupies residues 94–307 (KRDPQEAERL…GSALQQGFQK (214 aa)). Residues 256-271 (GRGRNAKAARPAKKGN) show a composition bias toward basic residues. Residues 272–285 (KHAESKADREEARA) show a composition bias toward basic and acidic residues. Residues 395-564 (PRAPVVTIMG…LLQAEVLELK (170 aa)) enclose the tr-type G domain. The segment at 404-411 (GHVDHGKT) is G1. 404–411 (GHVDHGKT) contacts GTP. The segment at 429 to 433 (GITQH) is G2. The tract at residues 450-453 (DTPG) is G3. GTP is bound by residues 450–454 (DTPGH) and 504–507 (NKID). Residues 504-507 (NKID) form a G4 region. Positions 540–542 (SAK) are G5.

Belongs to the TRAFAC class translation factor GTPase superfamily. Classic translation factor GTPase family. IF-2 subfamily.

The protein resides in the cytoplasm. One of the essential components for the initiation of protein synthesis. Protects formylmethionyl-tRNA from spontaneous hydrolysis and promotes its binding to the 30S ribosomal subunits. Also involved in the hydrolysis of GTP during the formation of the 70S ribosomal complex. This is Translation initiation factor IF-2 (infB) from Klebsiella oxytoca.